The following is a 309-amino-acid chain: THO complex subunit Tho3 (309 aa).

6 WD repeats span residues 22–61 (GQQG…FKFT), 65–107 (GNRG…PIAE), 109–148 (ESNY…IMET), 192–231 (AHNS…CERS), 234–273 (RMDY…QIWK), and 275–309 (PTNG…IFGL).

The protein belongs to the THOC3 family. As to quaternary structure, component of the transcription/export (TREX) complex, which is at least is formed of SUB2, TEX1 and YRA1 and the THO complex composed of HPR1, MFT1, THO2 and THP1.

The protein resides in the nucleus. Its function is as follows. Component of the TREX complex, which operates in coupling transcription elongation to mRNA export. The chain is THO complex subunit Tho3 (THO3) from Schizosaccharomyces pombe (strain 972 / ATCC 24843) (Fission yeast).